The following is a 271-amino-acid chain: RxLR effector protein PITG_15679 (271 aa).

Residues 1–18 form the signal peptide; the sequence is MKVLQLIALTALVSSCVA. Residues 49–69 carry the RxLR-dEER motif; sequence RSLRRYDLEGLDSVNSNREER. The 60-residue stretch at 212–271 folds into the Nudix hydrolase domain; that stretch reads RLLSANVVMRLNDKGEKQILLISSSNPKKGDFLLPKGGWDKGEDVKKAALREVIEEGGVR. The short motif at 248–269 is the Nudix box element; the sequence is GGWDKGEDVKKAALREVIEEGG.

In the N-terminal section; belongs to the RxLR effector family. This sequence in the C-terminal section; belongs to the Nudix hydrolase family.

The protein localises to the secreted. It localises to the host cytoplasm. The protein resides in the host nucleus. In terms of biological role, effector that enhances P.infestans colonization of Nicotiana benthamiana leaves. The chain is RxLR effector protein PITG_15679 from Phytophthora infestans (strain T30-4) (Potato late blight agent).